We begin with the raw amino-acid sequence, 288 residues long: Carbon monoxide dehydrogenase medium chain (288 aa).

Residues 1-177 enclose the FAD-binding PCMH-type domain; sequence MIPGSFDYHR…TAIRIPVPPT (177 aa). Residues 32–36 and 111–115 each bind FAD; these read AGGHS and TIGGN.

As to quaternary structure, dimer of heterotrimers. Each heterotrimer consists of a large, a medium and a small subunit. FAD is required as a cofactor.

The enzyme catalyses CO + a quinone + H2O = a quinol + CO2. Its function is as follows. Catalyzes the oxidation of carbon monoxide to carbon dioxide. This Afipia carboxidovorans (strain ATCC 49405 / DSM 1227 / KCTC 32145 / OM5) (Oligotropha carboxidovorans) protein is Carbon monoxide dehydrogenase medium chain (coxM).